The sequence spans 440 residues: Glycerate 2-kinase (440 aa).

Residue K58 coordinates substrate.

It belongs to the glycerate kinase type-1 family. Homodimer. Requires Mg(2+) as cofactor. The cofactor is Ni(2+). Mn(2+) is required as a cofactor. It depends on Co(2+) as a cofactor.

The catalysed reaction is (R)-glycerate + ATP = (2R)-2-phosphoglycerate + ADP + H(+). Its function is as follows. Catalyzes the ATP-dependent phosphorylation of D-glycerate to 2-phosphoglycerate. It can also utilize GTP, CTP, UTP, ADP or pyrophosphate as phosphate donor. This Pyrococcus horikoshii (strain ATCC 700860 / DSM 12428 / JCM 9974 / NBRC 100139 / OT-3) protein is Glycerate 2-kinase (gck).